The primary structure comprises 380 residues: Cytochrome b (380 aa).

A run of 4 helical transmembrane segments spans residues 33 to 53 (FGSL…FLAM), 77 to 98 (WLIR…FIHV), 113 to 133 (WNIG…GYVL), and 178 to 198 (FFAF…VHLL). 2 residues coordinate heme b: His-83 and His-97. Heme b contacts are provided by His-182 and His-196. Residue His-201 coordinates a ubiquinone. The next 4 helical transmembrane spans lie at 226–246 (IKDI…VLFF), 288–308 (LGGV…PLIN), 320–340 (ITQA…WIGG), and 347–367 (FTMI…MFMF).

Belongs to the cytochrome b family. As to quaternary structure, the cytochrome bc1 complex contains 11 subunits: 3 respiratory subunits (MT-CYB, CYC1 and UQCRFS1), 2 core proteins (UQCRC1 and UQCRC2) and 6 low-molecular weight proteins (UQCRH/QCR6, UQCRB/QCR7, UQCRQ/QCR8, UQCR10/QCR9, UQCR11/QCR10 and a cleavage product of UQCRFS1). This cytochrome bc1 complex then forms a dimer. It depends on heme b as a cofactor.

Its subcellular location is the mitochondrion inner membrane. Functionally, component of the ubiquinol-cytochrome c reductase complex (complex III or cytochrome b-c1 complex) that is part of the mitochondrial respiratory chain. The b-c1 complex mediates electron transfer from ubiquinol to cytochrome c. Contributes to the generation of a proton gradient across the mitochondrial membrane that is then used for ATP synthesis. This is Cytochrome b (MT-CYB) from Calomys musculinus (Drylands vesper mouse).